We begin with the raw amino-acid sequence, 533 residues long: CTP synthase (533 aa).

Residues 1-268 (MGETKYIFVT…DETILQKMGL (268 aa)) form an amidoligase domain region. Serine 15 provides a ligand contact to CTP. Serine 15 is a binding site for UTP. 16 to 21 (SLGKGI) is a binding site for ATP. Tyrosine 56 contacts L-glutamine. Aspartate 73 contributes to the ATP binding site. Mg(2+) contacts are provided by aspartate 73 and glutamate 143. Residues 150-152 (DIE), 189-194 (KTKPTQ), and lysine 225 each bind CTP. UTP contacts are provided by residues 189–194 (KTKPTQ) and lysine 225. Positions 301–533 (YVELQDAYKS…VSFIKAAIDK (233 aa)) constitute a Glutamine amidotransferase type-1 domain. An L-glutamine-binding site is contributed by glycine 356. Cysteine 383 serves as the catalytic Nucleophile; for glutamine hydrolysis. L-glutamine-binding positions include 384–387 (LGMQ), glutamate 407, and arginine 464. Catalysis depends on residues histidine 509 and glutamate 511.

Belongs to the CTP synthase family. In terms of assembly, homotetramer.

The catalysed reaction is UTP + L-glutamine + ATP + H2O = CTP + L-glutamate + ADP + phosphate + 2 H(+). It carries out the reaction L-glutamine + H2O = L-glutamate + NH4(+). The enzyme catalyses UTP + NH4(+) + ATP = CTP + ADP + phosphate + 2 H(+). It functions in the pathway pyrimidine metabolism; CTP biosynthesis via de novo pathway; CTP from UDP: step 2/2. With respect to regulation, allosterically activated by GTP, when glutamine is the substrate; GTP has no effect on the reaction when ammonia is the substrate. The allosteric effector GTP functions by stabilizing the protein conformation that binds the tetrahedral intermediate(s) formed during glutamine hydrolysis. Inhibited by the product CTP, via allosteric rather than competitive inhibition. In terms of biological role, catalyzes the ATP-dependent amination of UTP to CTP with either L-glutamine or ammonia as the source of nitrogen. Regulates intracellular CTP levels through interactions with the four ribonucleotide triphosphates. In Bacteroides fragilis (strain YCH46), this protein is CTP synthase.